The primary structure comprises 490 residues: Aspartyl/glutamyl-tRNA(Asn/Gln) amidotransferase subunit B (490 aa).

The protein belongs to the GatB/GatE family. GatB subfamily. Heterotrimer of A, B and C subunits.

The catalysed reaction is L-glutamyl-tRNA(Gln) + L-glutamine + ATP + H2O = L-glutaminyl-tRNA(Gln) + L-glutamate + ADP + phosphate + H(+). It carries out the reaction L-aspartyl-tRNA(Asn) + L-glutamine + ATP + H2O = L-asparaginyl-tRNA(Asn) + L-glutamate + ADP + phosphate + 2 H(+). In terms of biological role, allows the formation of correctly charged Asn-tRNA(Asn) or Gln-tRNA(Gln) through the transamidation of misacylated Asp-tRNA(Asn) or Glu-tRNA(Gln) in organisms which lack either or both of asparaginyl-tRNA or glutaminyl-tRNA synthetases. The reaction takes place in the presence of glutamine and ATP through an activated phospho-Asp-tRNA(Asn) or phospho-Glu-tRNA(Gln). The polypeptide is Aspartyl/glutamyl-tRNA(Asn/Gln) amidotransferase subunit B (Burkholderia mallei (strain NCTC 10247)).